A 1032-amino-acid chain; its full sequence is MTPDELNSAVVTFMANLNIDDSKANETASTVTDSIVHRSIKLLEVVVALKDYFLSENEVERKKALTCLTTILAKTPKDHLSKNECSVIFQFYQSKLDDQALAKEVLEGFAALAPMKYVSINEIAQLLRLLLDNYQQGQHLASTRLWPFKILRKIFDRFFVNGSSTEQVKRINDLFIETFLHVANGEKDPRNLLLSFALNKSITSSLQNVENFKEDLFDVLFCYFPITFKPPKHDPYKISNQDLKTALRSAITATPLFAEDAYSNLLDKLTASSPVVKNDTLLTLLECVRKFGGSSILENWTLLWNALKFEIMQNSEGNENTLLNPYNKDQQSDDVGQYTNYDACLKIINLMALQLYNFDKVSFEKFFTHVLDELKPNFKYEKDLKQTCQILSAIGSGNVEIFNKVISSTFPLFLINTSEVAKLKLLIMNFSFFVDSYIDLFGRTSKESLGTPVPNNKMAEYKDEIIMILSMALTRSSKAEVTIRTLSVIQFTKMIKMKGFLTPEEVSLIIQYFTEEILTDNNKNIYYACLEGLKTISEIYEDLVFEISLKKLLDLLPDCFEEKIRVNDEENIHIETILKIILDFTTSRHILVKESITFLATKLNRVAKISKSREYCFLLISTIYSLFNNNNQNENVLNEEDALALKNAIEPKLFEIITQESAIVSDNYNLTLLSNVLFFTNLKIPQAAHQEELDRYNELFISEGKIRILDTPNVLAISYAKILSALNKNCQFPQKFTVLFGTVQLLKKHAPRMTETEKLGYLELLLVLSNKFVSEKDVIGLFDWKDLSVINLEVMVWLTKGLIMQNSLESSEIAKKFIDLLSNEEIGSLVSKLFEVFVMDISSLKKFKGISWNNNVKILYKQKFFGDIFQTLVSNYKNTVDMTIKCNYLTALSLVLKHTPSQSVGPFINDLFPLLLQALDMPDPEVRVSALETLKDTTDKHHTLITEHVSTIVPLLLSLSLPHKYNSVSVRLIALQLLEMITTVVPLNYCLSYQDDVLSALIPVLSDKKRIIRKQCVDTRQVYYELGQIPFE.

HEAT repeat units follow at residues 862–901 (QKFF…HTPS), 905–943 (GPFI…KHHT), 946–988 (TEHV…VPLN), and 991–1029 (LSYQ…LGQI).

It belongs to the MET18/MMS19 family.

It localises to the nucleus. Key component of the cytosolic iron-sulfur protein assembly (CIA) machinery that mediates the incorporation of iron-sulfur cluster into apoproteins specifically involved in DNA metabolism and genomic integrity. Acts as an adapter between early-acting CIA components and a subset of cellular target iron-sulfur proteins such as RAD3/XPD and DNA2, thereby playing a key role in nucleotide excision repair (NER) and RNA polymerase II (POL II) transcription. The polypeptide is DNA repair/transcription protein MET18/MMS19 (MET18) (Saccharomyces cerevisiae (strain ATCC 204508 / S288c) (Baker's yeast)).